A 104-amino-acid polypeptide reads, in one-letter code: L-rhamnose mutarotase (104 aa).

Substrate is bound at residue Tyr-18. The active-site Proton donor is the His-22. Substrate contacts are provided by residues Tyr-41 and 76–77 (WW).

Belongs to the rhamnose mutarotase family. In terms of assembly, homodimer.

It is found in the cytoplasm. It carries out the reaction alpha-L-rhamnose = beta-L-rhamnose. Its pathway is carbohydrate metabolism; L-rhamnose metabolism. Its function is as follows. Involved in the anomeric conversion of L-rhamnose. The polypeptide is L-rhamnose mutarotase (Citrobacter koseri (strain ATCC BAA-895 / CDC 4225-83 / SGSC4696)).